The chain runs to 384 residues: 5-cytosine rRNA methyltransferase NSUN4 (384 aa).

Residues 1-25 (MAALVVRGVRDMLKRADFATVPRRQ) constitute a mitochondrion transit peptide. Residues Gly-185, Gly-186, Lys-187, and Asp-204 each contribute to the S-adenosyl-L-methionine site. Ser-206 carries the phosphoserine modification. The S-adenosyl-L-methionine site is built by Arg-209, Asp-237, Gly-238, and Asp-255. Residue Cys-310 is the Nucleophile of the active site.

It belongs to the class I-like SAM-binding methyltransferase superfamily. RsmB/NOP family. As to quaternary structure, heterodimer with MTERFD2/MTERF4; this interaction seems to be required for NSUN4 recruitment to the mitochondrial large ribosomal subunit.

The protein localises to the mitochondrion. The catalysed reaction is a cytidine in rRNA + S-adenosyl-L-methionine = a 5-methylcytidine in rRNA + S-adenosyl-L-homocysteine + H(+). It catalyses the reaction a cytidine in mRNA + S-adenosyl-L-methionine = a 5-methylcytidine in mRNA + S-adenosyl-L-homocysteine + H(+). Functionally, mitochondrial RNA cytosine C(5)-methyltransferase that methylates cytosine to 5-methylcytosine (m5C) in various RNAs, such as rRNAs, mRNAs and some long non-coding RNAs (lncRNAs). Involved in mitochondrial ribosome small subunit (SSU) maturation by catalyzing methylation of mitochondrial 12S rRNA; the function is independent of MTERFD2/MTERF4 and assembled mitochondrial ribosome large subunit (LSU). Targeted to LSU by MTERFD2/MTERF4 and probably is involved in a final step in ribosome biogenesis to ensure that SSU and LSU are assembled. In vitro can methylate 16S rRNA of the LSU; the methylation is enhanced by MTERFD/MTERF4. Also acts as a regulator of innate immunity by marking double-stranded mitochondrial RNAs(mt-dsRNAs) generated in response to stress: catalyzes m5C modification on mitochondrial RNAs, such as a mRNAs and lncRNAs, with a preference for the termini of light-strand lncRNAs, promoting their degradation and cytosolic release. Modified light-strand lncRNAs are then recognized by C1QBP reader and recruited to the mitochondrial degradosome complex, which promotes their degradation. The polypeptide is 5-cytosine rRNA methyltransferase NSUN4 (NSUN4) (Bos taurus (Bovine)).